Reading from the N-terminus, the 176-residue chain is Tubulin polymerization-promoting protein family member 3 (176 aa).

Alanine 2 is modified (N-acetylalanine). Positions 132-152 (TGSHKERFDESGKGKGIAGRQ) are disordered. Positions 134–144 (SHKERFDESGK) are enriched in basic and acidic residues.

The protein belongs to the TPPP family. In terms of tissue distribution, expressed in endometrium during the mid-secretory phase (LH + 7) (at protein level).

The protein localises to the cytoplasm. It is found in the cytoskeleton. In terms of biological role, regulator of microtubule dynamic that has microtubule bundling activity. Required for embryo implantation; possibly by regulating beta-catenin. Also required for decidualization via regulation of beta-catenin. The chain is Tubulin polymerization-promoting protein family member 3 from Homo sapiens (Human).